The primary structure comprises 202 residues: Adenosylcobalamin/alpha-ribazole phosphatase (202 aa).

The Tele-phosphohistidine intermediate role is filled by His8. Glu81 acts as the Proton donor/acceptor in catalysis.

This sequence belongs to the phosphoglycerate mutase family. In terms of assembly, monomer.

The catalysed reaction is adenosylcob(III)alamin 5'-phosphate + H2O = adenosylcob(III)alamin + phosphate. The enzyme catalyses alpha-ribazole 5'-phosphate + H2O = alpha-ribazole + phosphate. It functions in the pathway nucleoside biosynthesis; alpha-ribazole biosynthesis; alpha-ribazole from 5,6-dimethylbenzimidazole: step 2/2. In terms of biological role, catalyzes the conversion of adenosylcobalamin 5'-phosphate to adenosylcobalamin (vitamin B12); involved in the assembly of the nucleotide loop of cobalamin. Also catalyzes the hydrolysis of the phospho group from alpha-ribazole 5'-phosphate to form alpha-ribazole. The chain is Adenosylcobalamin/alpha-ribazole phosphatase (cobC) from Salmonella typhimurium (strain LT2 / SGSC1412 / ATCC 700720).